Here is a 156-residue protein sequence, read N- to C-terminus: 17.4 kDa class I heat shock protein (156 aa).

Residues 42–156 (DVAAFTNAKV…PEVKSVDISG (115 aa)) enclose the sHSP domain.

Belongs to the small heat shock protein (HSP20) family. As to quaternary structure, may form oligomeric structures. Binds to AKR2A.

The protein localises to the cytoplasm. The polypeptide is 17.4 kDa class I heat shock protein (HSP17.4A) (Arabidopsis thaliana (Mouse-ear cress)).